A 254-amino-acid chain; its full sequence is Probable phosphomannomutase (254 aa).

Asp-14 (nucleophile) is an active-site residue. Residues Asp-14 and Asp-16 each coordinate Mg(2+). Residue Asp-16 is the Proton donor/acceptor of the active site. The alpha-D-mannose 1-phosphate site is built by Arg-23, Arg-129, Arg-140, Arg-147, Ser-185, and Asp-187. Positions 214, 226, 228, and 231 each coordinate Mg(2+).

It belongs to the eukaryotic PMM family. In terms of assembly, homodimer.

The protein resides in the cytoplasm. The catalysed reaction is alpha-D-mannose 1-phosphate = D-mannose 6-phosphate. It functions in the pathway nucleotide-sugar biosynthesis; GDP-alpha-D-mannose biosynthesis; alpha-D-mannose 1-phosphate from D-fructose 6-phosphate: step 2/2. Its function is as follows. Involved in the synthesis of the GDP-mannose and dolichol-phosphate-mannose required for a number of critical mannosyl transfer reactions. This chain is Probable phosphomannomutase, found in Caenorhabditis elegans.